A 233-amino-acid polypeptide reads, in one-letter code: 5-demethoxyubiquinone hydroxylase, mitochondrial (233 aa).

A mitochondrion-targeting transit peptide spans 1–15; sequence MLSRVSVFKPASRGF. Phosphoserine occurs at positions 20 and 28. T32 bears the Phosphothreonine mark. 6 residues coordinate Fe cation: E63, E95, H98, E147, E194, and H197.

This sequence belongs to the COQ7 family. In terms of assembly, component of a multi-subunit COQ enzyme complex, composed of at least COQ3, COQ4, COQ5, COQ6, COQ7 and COQ9. Requires Fe cation as cofactor. Phosphorylated. Dephosphorylated by PTC7; dephosphorylation is essential for enzyme activation.

It is found in the mitochondrion inner membrane. The catalysed reaction is a 5-methoxy-2-methyl-3-(all-trans-polyprenyl)benzene-1,4-diol + AH2 + O2 = a 3-demethylubiquinol + A + H2O. It catalyses the reaction a 5-methoxy-2-methyl-3-(all-trans-polyprenyl)benzoquinone + NADH + O2 = a 3-demethylubiquinone + NAD(+) + H2O. Its pathway is cofactor biosynthesis; ubiquinone biosynthesis. Its activity is regulated as follows. Dephosphorylation by PTC7 leads to activation. In terms of biological role, catalyzes the hydroxylation of 2-hexaprenyl-3-methyl-6-methoxy-1,4-benzoquinol (DMQH2) during ubiquinone biosynthesis. Also catalyzes the hydroxylation of the 5-methoxy-2-methyl-3-(all-trans-polyprenyl)benzoquinone at the C6 position and participates in the biosynthesis of ubiquinone. Also has a structural role in the COQ enzyme complex, stabilizing COQ3 and COQ4 polypeptides. This is 5-demethoxyubiquinone hydroxylase, mitochondrial from Saccharomyces cerevisiae (strain ATCC 204508 / S288c) (Baker's yeast).